A 215-amino-acid chain; its full sequence is Adenylate kinase (215 aa).

An ATP-binding site is contributed by 10-15 (GAGKGT). Positions 30–59 (STGDIFRDAVNQGSELGQEAQKYMSSGQLV) are NMP. AMP contacts are provided by residues threonine 31, arginine 36, 57–59 (QLV), 85–88 (GFPR), and glutamine 92. The LID stretch occupies residues 126–163 (GRISCRECKRVYNLNFNPPREQGKCDSCGGELVQRNDD). Arginine 127 is a binding site for ATP. Positions 130 and 133 each coordinate Zn(2+). 136-137 (VY) serves as a coordination point for ATP. Residues cysteine 150 and cysteine 153 each coordinate Zn(2+). AMP contacts are provided by arginine 160 and arginine 171. Residue arginine 199 participates in ATP binding.

It belongs to the adenylate kinase family. As to quaternary structure, monomer.

The protein localises to the cytoplasm. It catalyses the reaction AMP + ATP = 2 ADP. It functions in the pathway purine metabolism; AMP biosynthesis via salvage pathway; AMP from ADP: step 1/1. Catalyzes the reversible transfer of the terminal phosphate group between ATP and AMP. Plays an important role in cellular energy homeostasis and in adenine nucleotide metabolism. The polypeptide is Adenylate kinase (Syntrophomonas wolfei subsp. wolfei (strain DSM 2245B / Goettingen)).